Reading from the N-terminus, the 545-residue chain is MATNYIFVTGGVVSSLGKGIAAASLASILEARGLNVTIMKLDPYINVDPGTMSPTQHGEVFVTQDGAETDLDLGHYERFIRSKMSKANNFTSGKIYSEVLRKERRGDYLGATIQVIPHITNEIKERVIEGGKGRDVVIVEVGGTVGDIESLPFLEALRQLAVDVGREKTLFMHLTLVPYIPTAGEVKTKPTQHSVKELLSIGIQPDVLICRSDRAIPSNERKKIALFCNVPERAVISLKDVDSIYRIPELLKSQGLDTFVCDRFRLDCPEADLSEWEQVLYRQANPTGEVTIGMVGKYVELPDAYKSVNEALKHAGLTNRLTVNIKYIDSQDIETKGVELLHGLDAILVPGGFGYRGVEGKIRTAQYARENKIPYLGICLGMQIALIEYARNVAGLTQANSSEFDKDCPQPVVGLITEWQDESGNVETRSDESDLGGTMRLGAQQCHLIEGTKAREVYGAETIVERHRHRYEVNNTLLPQIEAAGLKVSGLSADRKLVEIIEIPNHPWFIAAQFHPEFTSTPRDGHPLFAGFVAAAKAYQDSHKA.

The segment at 1 to 266 (MATNYIFVTG…DTFVCDRFRL (266 aa)) is amidoligase domain. Residue serine 14 participates in CTP binding. A UTP-binding site is contributed by serine 14. Residues 15–20 (SLGKGI) and aspartate 72 each bind ATP. The Mg(2+) site is built by aspartate 72 and glutamate 140. CTP contacts are provided by residues 147–149 (DIE), 187–192 (KTKPTQ), and lysine 223. UTP-binding positions include 187-192 (KTKPTQ) and lysine 223. Residue 239–241 (KDV) coordinates ATP. One can recognise a Glutamine amidotransferase type-1 domain in the interval 291–542 (TIGMVGKYVE…VAAAKAYQDS (252 aa)). Glycine 352 is a binding site for L-glutamine. Cysteine 379 serves as the catalytic Nucleophile; for glutamine hydrolysis. Residues 380-383 (LGMQ), glutamate 403, and arginine 470 each bind L-glutamine. Active-site residues include histidine 515 and glutamate 517.

This sequence belongs to the CTP synthase family. As to quaternary structure, homotetramer.

It catalyses the reaction UTP + L-glutamine + ATP + H2O = CTP + L-glutamate + ADP + phosphate + 2 H(+). It carries out the reaction L-glutamine + H2O = L-glutamate + NH4(+). The enzyme catalyses UTP + NH4(+) + ATP = CTP + ADP + phosphate + 2 H(+). The protein operates within pyrimidine metabolism; CTP biosynthesis via de novo pathway; CTP from UDP: step 2/2. Allosterically activated by GTP, when glutamine is the substrate; GTP has no effect on the reaction when ammonia is the substrate. The allosteric effector GTP functions by stabilizing the protein conformation that binds the tetrahedral intermediate(s) formed during glutamine hydrolysis. Inhibited by the product CTP, via allosteric rather than competitive inhibition. Functionally, catalyzes the ATP-dependent amination of UTP to CTP with either L-glutamine or ammonia as the source of nitrogen. Regulates intracellular CTP levels through interactions with the four ribonucleotide triphosphates. The polypeptide is CTP synthase (Actinobacillus pleuropneumoniae serotype 5b (strain L20)).